Reading from the N-terminus, the 447-residue chain is Innexin-5 (447 aa).

The next 4 membrane-spanning stretches (helical) occupy residues T30–V47, Q108–W128, A198–L218, and V283–A303. The interval K389–R447 is disordered. Residues T426–S438 show a composition bias toward acidic residues.

This sequence belongs to the pannexin family.

The protein localises to the cell membrane. The protein resides in the cell junction. Its subcellular location is the gap junction. Its function is as follows. Structural component of the gap junctions. The sequence is that of Innexin-5 (inx-5) from Caenorhabditis elegans.